The sequence spans 320 residues: Beta-ketoacyl-[acyl-carrier-protein] synthase III (320 aa).

Catalysis depends on residues C113 and H247. The interval 248 to 252 (QANRR) is ACP-binding. Residue N277 is part of the active site.

This sequence belongs to the thiolase-like superfamily. FabH family. In terms of assembly, homodimer.

The protein localises to the cytoplasm. It catalyses the reaction malonyl-[ACP] + acetyl-CoA + H(+) = 3-oxobutanoyl-[ACP] + CO2 + CoA. It participates in lipid metabolism; fatty acid biosynthesis. Its function is as follows. Catalyzes the condensation reaction of fatty acid synthesis by the addition to an acyl acceptor of two carbons from malonyl-ACP. Catalyzes the first condensation reaction which initiates fatty acid synthesis and may therefore play a role in governing the total rate of fatty acid production. Possesses both acetoacetyl-ACP synthase and acetyl transacylase activities. Its substrate specificity determines the biosynthesis of branched-chain and/or straight-chain of fatty acids. The protein is Beta-ketoacyl-[acyl-carrier-protein] synthase III of Acidiphilium cryptum (strain JF-5).